Consider the following 218-residue polypeptide: MKDVIKDLSELRMSYEKGELHEAQVDTHPHEQFLQWFNHALQSNLHEPYAMSLATCNRQGRPHVRTVLLRGATAQGYDFYTNYDSQKGIDLAENPYAELLFYWPSLERQVRIGGIVNKISEHESTDYYHKRPRDSQIAAHISTPQSGIIANREELQQRFNRLYEQVGQQTVLSKPEFWGGYRLQADYYEFWQGRPNRLHDRLSYQNTDGTWVVQRLMP.

Substrate-binding positions include 12-15 and Arg70; that span reads RMSY. FMN-binding positions include 65–70, 80–81, Lys87, and Gln109; these read RTVLLR and YT. Positions 127, 131, and 135 each coordinate substrate. FMN contacts are provided by residues 145–146 and Trp191; that span reads QS. 197 to 199 lines the substrate pocket; sequence RLH. FMN is bound at residue Arg201.

The protein belongs to the pyridoxamine 5'-phosphate oxidase family. In terms of assembly, homodimer. FMN serves as cofactor.

It carries out the reaction pyridoxamine 5'-phosphate + O2 + H2O = pyridoxal 5'-phosphate + H2O2 + NH4(+). The enzyme catalyses pyridoxine 5'-phosphate + O2 = pyridoxal 5'-phosphate + H2O2. The protein operates within cofactor metabolism; pyridoxal 5'-phosphate salvage; pyridoxal 5'-phosphate from pyridoxamine 5'-phosphate: step 1/1. It participates in cofactor metabolism; pyridoxal 5'-phosphate salvage; pyridoxal 5'-phosphate from pyridoxine 5'-phosphate: step 1/1. Its function is as follows. Catalyzes the oxidation of either pyridoxine 5'-phosphate (PNP) or pyridoxamine 5'-phosphate (PMP) into pyridoxal 5'-phosphate (PLP). The polypeptide is Pyridoxine/pyridoxamine 5'-phosphate oxidase (Acinetobacter baylyi (strain ATCC 33305 / BD413 / ADP1)).